Consider the following 350-residue polypeptide: S-adenosylmethionine:tRNA ribosyltransferase-isomerase (350 aa).

It belongs to the QueA family. In terms of assembly, monomer.

It is found in the cytoplasm. The enzyme catalyses 7-aminomethyl-7-carbaguanosine(34) in tRNA + S-adenosyl-L-methionine = epoxyqueuosine(34) in tRNA + adenine + L-methionine + 2 H(+). It participates in tRNA modification; tRNA-queuosine biosynthesis. Its function is as follows. Transfers and isomerizes the ribose moiety from AdoMet to the 7-aminomethyl group of 7-deazaguanine (preQ1-tRNA) to give epoxyqueuosine (oQ-tRNA). This Bacillus cereus (strain ZK / E33L) protein is S-adenosylmethionine:tRNA ribosyltransferase-isomerase.